The primary structure comprises 215 residues: Probable phosphoglycerate mutase GpmB (215 aa).

Substrate is bound by residues 8–15 (RHGETQWN), 21–22 (QG), arginine 58, lysine 60, 82–85 (ELDM), 104–105 (RR), and 151–152 (GI). The active-site Tele-phosphohistidine intermediate is histidine 9. Glutamate 82 serves as the catalytic Proton donor/acceptor.

The protein belongs to the phosphoglycerate mutase family. GpmB subfamily.

It catalyses the reaction (2R)-2-phosphoglycerate = (2R)-3-phosphoglycerate. It participates in carbohydrate degradation; glycolysis; pyruvate from D-glyceraldehyde 3-phosphate: step 3/5. This Salmonella agona (strain SL483) protein is Probable phosphoglycerate mutase GpmB.